Reading from the N-terminus, the 245-residue chain is MRVGVLGAKGKVGATMVAGVQAAEDLTFTTGIDAGDPLSALVDTDTEVVIDFTHPDVVMDNLKFLIENGIHAVVGTTGFTDERLDQVRKWLEAKPDVSVLIAPNFAIGAVLSMHFAQQAAKHFESVEVIELHHPHKADAPSGTAARTARLIAEARKGMPPNPDATSTGLEGARGADVDGVPVHSIRLAGLVAHQEVLFGTLGETLTIRHDSIDRTSFVPGVLLAVRKIRENPGLTIGIESLLDLA.

NAD(+) is bound by residues G7–V12, G75–T77, and A102–F105. The active-site Proton donor/acceptor is the H132. A (S)-2,3,4,5-tetrahydrodipicolinate-binding site is contributed by H133. K136 functions as the Proton donor in the catalytic mechanism. G142 to T143 is a binding site for (S)-2,3,4,5-tetrahydrodipicolinate.

The protein belongs to the DapB family.

It localises to the cytoplasm. The enzyme catalyses (S)-2,3,4,5-tetrahydrodipicolinate + NAD(+) + H2O = (2S,4S)-4-hydroxy-2,3,4,5-tetrahydrodipicolinate + NADH + H(+). It carries out the reaction (S)-2,3,4,5-tetrahydrodipicolinate + NADP(+) + H2O = (2S,4S)-4-hydroxy-2,3,4,5-tetrahydrodipicolinate + NADPH + H(+). The protein operates within amino-acid biosynthesis; L-lysine biosynthesis via DAP pathway; (S)-tetrahydrodipicolinate from L-aspartate: step 4/4. In terms of biological role, catalyzes the conversion of 4-hydroxy-tetrahydrodipicolinate (HTPA) to tetrahydrodipicolinate. This chain is 4-hydroxy-tetrahydrodipicolinate reductase, found in Mycolicibacterium gilvum (strain PYR-GCK) (Mycobacterium gilvum (strain PYR-GCK)).